The chain runs to 928 residues: TBC1 domain family member 2A (928 aa).

Met-1 carries the post-translational modification N-acetylmethionine. The span at 1–19 (MEGAGENAPESSSSAPGSE) shows a compositional bias: low complexity. Positions 1–39 (MEGAGENAPESSSSAPGSEESARDPQVPPPEEESGDCAR) are disordered. An interaction with CADH1 region spans residues 1–169 (MEGAGENAPE…AGNGPVLHLE (169 aa)). Residues 45–142 (PKKLCGYLSK…WLQQLQMKRW (98 aa)) enclose the PH domain. The disordered stretch occupies residues 225-275 (NKQAQGTGHEPPGEDSPQSGEPQREEQPLASDASTPGREPEDSPKPAPKPS). An interaction with RAC1 region spans residues 295 to 433 (SEGITRNRTA…KVTQDFTHPP (139 aa)). The stretch at 298 to 416 (ITRNRTAQEK…LMDKNHAKQQ (119 aa)) forms a coiled coil. The residue at position 436 (Ser-436) is a Phosphoserine. The Rab-GAP TBC domain maps to 625-817 (GVPREHRPRV…RVWDAFLYEG (193 aa)). A coiled-coil region spans residues 875 to 913 (MKQLRQLRMVHRERLEAELRELEQLKAEYLERRASRRRA). 2 positions are modified to phosphoserine: Ser-915 and Ser-920.

Interacts with activated RAC1 and CDH1. Expressed in a broad range of tissues, especially in kidney, liver, lung and placenta. Also expressed in keratinocytes and epithelia-containing organs. Isoform 2 is differentially expressed in prostate normal and cancer cells (at protein level).

Its subcellular location is the cytoplasm. It is found in the cytoplasmic vesicle. It localises to the cell junction. Acts as a GTPase-activating protein for RAB7A. Signal effector acting as a linker between RAC1 and RAB7A, leading to RAB7A inactivation and subsequent inhibition of cadherin degradation and reduced cell-cell adhesion. This chain is TBC1 domain family member 2A (TBC1D2), found in Homo sapiens (Human).